The following is a 116-amino-acid chain: Anti-sigma F factor antagonist (116 aa).

The STAS domain occupies 3–113 (LAIDLEVKKD…ESEQYALHRL (111 aa)). Ser58 carries the post-translational modification Phosphoserine.

This sequence belongs to the anti-sigma-factor antagonist family. Post-translationally, phosphorylated by SpoIIAB on a serine residue.

Functionally, in the phosphorylated form it could act as an anti-anti-sigma factor that counteracts SpoIIAB and thus releases sigma f from inhibition. This chain is Anti-sigma F factor antagonist (spoIIAA), found in Heyndrickxia coagulans (Weizmannia coagulans).